A 947-amino-acid chain; its full sequence is Protein translocase subunit SecA 1 (947 aa).

ATP-binding positions include Gln-87, 105-109, and Asp-525; that span reads GEGKT. A disordered region spans residues 907 to 937; the sequence is DDADKAARDPNRPETWGKVGRNEDCPCNSGK. The segment covering 908–918 has biased composition (basic and acidic residues); the sequence is DADKAARDPNR. 4 residues coordinate Zn(2+): Cys-931, Cys-933, Cys-942, and His-943.

The protein belongs to the SecA family. As to quaternary structure, monomer and homodimer. Part of the essential Sec protein translocation apparatus which comprises SecA, SecYEG and auxiliary proteins SecDF-YajC and YidC. It depends on Zn(2+) as a cofactor.

It localises to the cell inner membrane. It is found in the cytoplasm. It catalyses the reaction ATP + H2O + cellular proteinSide 1 = ADP + phosphate + cellular proteinSide 2.. Its function is as follows. Part of the Sec protein translocase complex. Interacts with the SecYEG preprotein conducting channel. Has a central role in coupling the hydrolysis of ATP to the transfer of proteins into and across the cell membrane, serving both as a receptor for the preprotein-SecB complex and as an ATP-driven molecular motor driving the stepwise translocation of polypeptide chains across the membrane. This chain is Protein translocase subunit SecA 1, found in Rhodopseudomonas palustris (strain BisA53).